Reading from the N-terminus, the 294-residue chain is MEFRQLKYFIAVAEAGNMAAAAKRLHVSQPPITRQMQALEADLGVVLLERSHRGIELTAAGHAFLEDARRILELAGRSGDRSRAAARGDVGELSVAYFGTPIYRSLPLLLRAFLTSTPTATVSLTHMTKDEQVEGLLAGTIHVGFSRFFPRHPGIEIVNIAQEDLYLAVHRSQSGKFGKTCKLADLRAVELTLFPRGGRPSFADEVIGLFKHAGIEPRIARVVEDATAALALTMAGAASSIVPASVAAIRWPDIAFARIVGTRVKVPISCTFRKEKQPPILARFVEHVRRSAKD.

Residues M1–T58 form the HTH lysR-type domain. Residues M18–Q37 constitute a DNA-binding region (H-T-H motif).

The protein belongs to the LysR transcriptional regulatory family.

Its function is as follows. Involved in regulation of chlorinated catechol metabolism. Transcriptional activator of the tcbCDEF chlorocatechol oxidative operon. May bind 2-chloromuconate as an inducer. The chain is HTH-type transcriptional regulator TcbR (tcbR) from Pseudomonas sp. (strain P51).